We begin with the raw amino-acid sequence, 730 residues long: Diacylglycerol kinase alpha (730 aa).

EF-hand domains are found at residues 111-146 and 156-191; these read RPED…MMRV and ELRP…TVPL. Ca(2+)-binding residues include Asp-124, Asp-126, Asn-128, Glu-135, Asp-169, Asp-171, Ser-173, Ser-175, and Glu-180. 2 consecutive Phorbol-ester/DAG-type zinc fingers follow at residues 206-254 and 270-320; these read NHIW…AQPC and SHLW…GPEC. The 134-residue stretch at 368–501 folds into the DAGKc domain; the sequence is SNTHPLLVFI…LDRWFLEVIP (134 aa). The residue at position 479 (Lys-479) is an N6-acetyllysine.

The protein belongs to the eukaryotic diacylglycerol kinase family. Monomer.

The protein localises to the cytoplasm. It is found in the cytosol. It carries out the reaction a 1,2-diacyl-sn-glycerol + ATP = a 1,2-diacyl-sn-glycero-3-phosphate + ADP + H(+). The enzyme catalyses a 1-O-alkyl-sn-glycerol + ATP = a 1-O-alkyl-sn-glycero-3-phosphate + ADP + H(+). The catalysed reaction is 1-O-alkyl-2-acyl-sn-glycerol + ATP = 1-O-alkyl-2-acyl-sn-glycero-3-phosphate + ADP + H(+). It catalyses the reaction 1,2-dihexadecanoyl-sn-glycerol + ATP = 1,2-dihexadecanoyl-sn-glycero-3-phosphate + ADP + H(+). It carries out the reaction 1-hexadecanoyl-2-(9Z-octadecenoyl)-sn-glycerol + ATP = 1-hexadecanoyl-2-(9Z-octadecenoyl)-sn-glycero-3-phosphate + ADP + H(+). The enzyme catalyses 2-(9Z-octadecenoyl)-glycerol + ATP = 2-(9Z-octadecenoyl)-sn-glycero-3-phosphate + ADP + H(+). The catalysed reaction is 1,2-di-(9Z-octadecenoyl)-sn-glycerol + ATP = 1,2-di-(9Z-octadecenoyl)-sn-glycero-3-phosphate + ADP + H(+). It catalyses the reaction 1-octadecanoyl-2-(5Z,8Z,11Z,14Z-eicosatetraenoyl)-sn-glycerol + ATP = 1-octadecanoyl-2-(5Z,8Z,11Z,14Z-eicosatetraenoyl)-sn-glycero-3-phosphate + ADP + H(+). It carries out the reaction 1,2-didecanoyl-sn-glycerol + ATP = 1,2-didecanoyl-sn-glycero-3-phosphate + ADP + H(+). The enzyme catalyses 1-O-hexadecyl-2-acetyl-sn-glycerol + ATP = 1-O-hexadecyl-2-acetyl-sn-glycero-3-phosphate + ADP + H(+). The catalysed reaction is 1-O-hexadecyl-2-(5Z,8Z,11Z,14Z-eicosatetraenoyl)-sn-glycerol + ATP = 1-O-hexadecyl-2-(5Z,8Z,11Z,14Z-eicosatetraenoyl)-sn-glycero-3-phosphate + ADP + H(+). It catalyses the reaction 1-O-hexadecyl-2-(9Z-octadecenoyl)-sn-glycerol + ATP = 1-O-hexadecyl-2-(9Z-octadecenoyl)-sn-glycero-3-phosphate + ADP + H(+). It carries out the reaction 1-O-hexadecyl-sn-glycerol + ATP = 1-O-hexadecyl-sn-glycero-3-phosphate + ADP + H(+). It functions in the pathway lipid metabolism; glycerolipid metabolism. With respect to regulation, stimulated by calcium and phosphatidylserine. Diacylglycerol kinase that converts diacylglycerol/DAG into phosphatidic acid/phosphatidate/PA and regulates the respective levels of these two bioactive lipids. Thereby, acts as a central switch between the signaling pathways activated by these second messengers with different cellular targets and opposite effects in numerous biological processes. Also plays an important role in the biosynthesis of complex lipids. Can also phosphorylate 1-alkyl-2-acylglycerol in vitro as efficiently as diacylglycerol provided it contains an arachidonoyl group. Also involved in the production of alkyl-lysophosphatidic acid, another bioactive lipid, through the phosphorylation of 1-alkyl-2-acetyl glycerol. This is Diacylglycerol kinase alpha (Dgka) from Mus musculus (Mouse).